Consider the following 430-residue polypeptide: UDP-glucose 6-dehydrogenase AglM (430 aa).

Residue Cys-269 is part of the active site.

This sequence belongs to the UDP-glucose/GDP-mannose dehydrogenase family.

The enzyme catalyses UDP-alpha-D-glucose + 2 NAD(+) + H2O = UDP-alpha-D-glucuronate + 2 NADH + 3 H(+). Its pathway is nucleotide-sugar biosynthesis; UDP-alpha-D-glucuronate biosynthesis; UDP-alpha-D-glucuronate from UDP-alpha-D-glucose: step 1/1. It functions in the pathway cell surface structure biogenesis; S-layer biogenesis. Its activity is regulated as follows. Activity improves as salinity decreases. Its function is as follows. Involved in the assembly of a N-linked pentasaccharide that decorates the S-layer glycoprotein and flagellins. Involved in the biosynthesis of the hexuronic acids found at both positions 2 and 3 of the pentasaccharide. This is UDP-glucose 6-dehydrogenase AglM (aglM) from Haloferax volcanii (strain ATCC 29605 / DSM 3757 / JCM 8879 / NBRC 14742 / NCIMB 2012 / VKM B-1768 / DS2) (Halobacterium volcanii).